A 213-amino-acid polypeptide reads, in one-letter code: ATP phosphoribosyltransferase (213 aa).

The protein belongs to the ATP phosphoribosyltransferase family. Short subfamily. In terms of assembly, heteromultimer composed of HisG and HisZ subunits.

It is found in the cytoplasm. The catalysed reaction is 1-(5-phospho-beta-D-ribosyl)-ATP + diphosphate = 5-phospho-alpha-D-ribose 1-diphosphate + ATP. It participates in amino-acid biosynthesis; L-histidine biosynthesis; L-histidine from 5-phospho-alpha-D-ribose 1-diphosphate: step 1/9. Its function is as follows. Catalyzes the condensation of ATP and 5-phosphoribose 1-diphosphate to form N'-(5'-phosphoribosyl)-ATP (PR-ATP). Has a crucial role in the pathway because the rate of histidine biosynthesis seems to be controlled primarily by regulation of HisG enzymatic activity. The polypeptide is ATP phosphoribosyltransferase (hisG) (Bacillus subtilis (strain 168)).